A 283-amino-acid chain; its full sequence is tRNA pseudouridine synthase A (283 aa).

The active-site Nucleophile is Asp73. The tract at residues 120 to 124 (FHARF) is RNA binding. Substrate is bound at residue Tyr131. The interaction with tRNA stretch occupies residues 181 to 185 (QCQSR).

It belongs to the tRNA pseudouridine synthase TruA family. As to quaternary structure, homodimer.

The enzyme catalyses uridine(38/39/40) in tRNA = pseudouridine(38/39/40) in tRNA. Its function is as follows. Formation of pseudouridine at positions 38, 39 and 40 in the anticodon stem and loop of transfer RNAs. This chain is tRNA pseudouridine synthase A, found in Pectobacterium atrosepticum (strain SCRI 1043 / ATCC BAA-672) (Erwinia carotovora subsp. atroseptica).